Consider the following 227-residue polypeptide: NAD(P)H-hydrate epimerase (227 aa).

The YjeF N-terminal domain occupies 10–227; that stretch reads MRALETAAFN…GKIMVQYIGL (218 aa). Residue 62–66 coordinates (6S)-NADPHX; it reads NNGGD. K(+) contacts are provided by asparagine 63 and aspartate 142. Residues 146–152 and aspartate 176 each bind (6S)-NADPHX; that span reads GIGLNRP. Serine 179 serves as a coordination point for K(+).

This sequence belongs to the NnrE/AIBP family. K(+) is required as a cofactor.

The enzyme catalyses (6R)-NADHX = (6S)-NADHX. It carries out the reaction (6R)-NADPHX = (6S)-NADPHX. Catalyzes the epimerization of the S- and R-forms of NAD(P)HX, a damaged form of NAD(P)H that is a result of enzymatic or heat-dependent hydration. This is a prerequisite for the S-specific NAD(P)H-hydrate dehydratase to allow the repair of both epimers of NAD(P)HX. The sequence is that of NAD(P)H-hydrate epimerase from Roseobacter litoralis (strain ATCC 49566 / DSM 6996 / JCM 21268 / NBRC 15278 / OCh 149).